We begin with the raw amino-acid sequence, 208 residues long: Ribonuclease HII (208 aa).

The 192-residue stretch at L17–K208 folds into the RNase H type-2 domain. The a divalent metal cation site is built by D23, E24, and D120.

Belongs to the RNase HII family. Requires Mn(2+) as cofactor. It depends on Mg(2+) as a cofactor.

Its subcellular location is the cytoplasm. It carries out the reaction Endonucleolytic cleavage to 5'-phosphomonoester.. Its function is as follows. Endonuclease that specifically degrades the RNA of RNA-DNA hybrids. In Chlorobium luteolum (strain DSM 273 / BCRC 81028 / 2530) (Pelodictyon luteolum), this protein is Ribonuclease HII.